A 74-amino-acid chain; its full sequence is Large ribosomal subunit protein bL31 (74 aa).

Residues cysteine 16, cysteine 18, cysteine 38, and cysteine 41 each contribute to the Zn(2+) site.

Belongs to the bacterial ribosomal protein bL31 family. Type A subfamily. As to quaternary structure, part of the 50S ribosomal subunit. It depends on Zn(2+) as a cofactor.

Binds the 23S rRNA. In Streptomyces griseus subsp. griseus (strain JCM 4626 / CBS 651.72 / NBRC 13350 / KCC S-0626 / ISP 5235), this protein is Large ribosomal subunit protein bL31.